The following is a 243-amino-acid chain: Polycomb group RING finger protein 1 (243 aa).

A Glycyl lysine isopeptide (Lys-Gly) (interchain with G-Cter in SUMO2) cross-link involves residue lysine 12. An RING-type zinc finger spans residues cysteine 35–asparagine 74. Residues asparagine 74–proline 231 form a necessary for repressor activity region. A Glycyl lysine isopeptide (Lys-Gly) (interchain with G-Cter in SUMO2) cross-link involves residue lysine 76. The required for the interaction with the KDM2B-SKP1 heterodimeric complex stretch occupies residues leucine 138–lysine 239. The RING-finger and WD40-associated ubiquitin-like domain (RAWUL); sufficient for interaction with BCOR and BCORL1 stretch occupies residues glutamate 151–lysine 239.

In terms of assembly, interacts with BCORL1, forming heterodimers. The PCGF1-BCORL1 heterodimeric complex interacts with the KDM2B-SKP1 heterodimeric complex to form a homotetrameric polycomb repression complex 1 (PRC1.1). Component of the repressive BCOR complex containing a Polycomb group subcomplex at least composed of RYBP, RING1 and RNF2/RING2. Specifically interacts with BCOR, RING1 and RNF2/RING2. Component of a PRC1-like complex. Interacts with CBX6, CBX7 and CBX8. Interacts with DPPA4, NANOG, POU5F1 and RYBP. As to expression, highly expressed in brain, cerebellum, heart and testis.

It is found in the nucleus. Component of the Polycomb group (PcG) multiprotein BCOR complex, a complex required to maintain the transcriptionally repressive state of some genes, such as BCL6 and the cyclin-dependent kinase inhibitor, CDKN1A. Transcriptional repressor that may be targeted to the DNA by BCL6; this transcription repressor activity may be related to PKC signaling pathway. Represses CDKN1A expression by binding to its promoter, and this repression is dependent on the retinoic acid response element (RARE element). Promotes cell cycle progression and enhances cell proliferation as well. May have a positive role in tumor cell growth by down-regulating CDKN1A. Component of a Polycomb group (PcG) multiprotein PRC1-like complex, a complex class required to maintain the transcriptionally repressive state of many genes, including Hox genes, throughout development. PcG PRC1 complex acts via chromatin remodeling and modification of histones; it mediates monoubiquitination of histone H2A 'Lys-119', rendering chromatin heritably changed in its expressibility. Within the PRC1-like complex, regulates RNF2 ubiquitin ligase activity. Regulates the expression of DPPA4 and NANOG in the NT2 embryonic carcinoma cells. The sequence is that of Polycomb group RING finger protein 1 (Pcgf1) from Rattus norvegicus (Rat).